The sequence spans 70 residues: Conotoxin Vc6.10 (70 aa).

The signal sequence occupies residues Met-1–Ala-19. The propeptide occupies Leu-20–Asp-40. 3 disulfides stabilise this stretch: Cys-43–Cys-57, Cys-50–Cys-62, and Cys-56–Cys-69.

The protein belongs to the conotoxin O2 superfamily. As to expression, expressed by the venom duct.

The protein localises to the secreted. Functionally, inhibits voltage-gated ion channels. This chain is Conotoxin Vc6.10, found in Conus victoriae (Queen Victoria cone).